We begin with the raw amino-acid sequence, 183 residues long: Adenine phosphoribosyltransferase (183 aa).

The protein belongs to the purine/pyrimidine phosphoribosyltransferase family. Homodimer.

It localises to the cytoplasm. It carries out the reaction AMP + diphosphate = 5-phospho-alpha-D-ribose 1-diphosphate + adenine. It participates in purine metabolism; AMP biosynthesis via salvage pathway; AMP from adenine: step 1/1. Catalyzes a salvage reaction resulting in the formation of AMP, that is energically less costly than de novo synthesis. This chain is Adenine phosphoribosyltransferase, found in Corynebacterium kroppenstedtii (strain DSM 44385 / JCM 11950 / CIP 105744 / CCUG 35717).